The primary structure comprises 342 residues: S-adenosylmethionine:tRNA ribosyltransferase-isomerase (342 aa).

Belongs to the QueA family. In terms of assembly, monomer.

The protein localises to the cytoplasm. The catalysed reaction is 7-aminomethyl-7-carbaguanosine(34) in tRNA + S-adenosyl-L-methionine = epoxyqueuosine(34) in tRNA + adenine + L-methionine + 2 H(+). The protein operates within tRNA modification; tRNA-queuosine biosynthesis. In terms of biological role, transfers and isomerizes the ribose moiety from AdoMet to the 7-aminomethyl group of 7-deazaguanine (preQ1-tRNA) to give epoxyqueuosine (oQ-tRNA). This is S-adenosylmethionine:tRNA ribosyltransferase-isomerase from Streptococcus pyogenes serotype M49 (strain NZ131).